Reading from the N-terminus, the 133-residue chain is uncharacterized protein (133 aa).

Positions 1-22 (MYRSSISIQVFICVLFLPLDSG) are cleaved as a signal peptide. Residue Asn-111 is glycosylated (N-linked (GlcNAc...) asparagine).

It is found in the secreted. This is an uncharacterized protein from Saccharomyces cerevisiae (strain ATCC 204508 / S288c) (Baker's yeast).